The following is a 260-amino-acid chain: Flap endonuclease Xni (260 aa).

Asp109 is a Mg(2+) binding site. The 5'-3' exonuclease domain maps to 165–259; sequence VKPSQLADYW…DIRFTGPNKA (95 aa). Residues Leu176, Pro185, Val187, and Ile190 each contribute to the K(+) site. The tract at residues 189-194 is interaction with DNA; the sequence is GIGPKA.

This sequence belongs to the Xni family. Requires Mg(2+) as cofactor. The cofactor is K(+).

Its function is as follows. Has flap endonuclease activity. During DNA replication, flap endonucleases cleave the 5'-overhanging flap structure that is generated by displacement synthesis when DNA polymerase encounters the 5'-end of a downstream Okazaki fragment. The protein is Flap endonuclease Xni of Vibrio parahaemolyticus serotype O3:K6 (strain RIMD 2210633).